The sequence spans 1253 residues: Methionine synthase (1253 aa).

Residues 6–326 form the Hcy-binding domain; that stretch reads QDEIEAILRK…DHIREIAEAV (321 aa). Residues Cys-248, Cys-311, and Cys-312 each contribute to the Zn(2+) site. Residues 359-620 enclose the Pterin-binding domain; it reads FVNIGERCNV…IHKDLLQLCE (262 aa). Residues 370 to 372, Asp-437, Asn-458, Asp-525, Asn-567, Arg-573, and Arg-579 each bind (6S)-5,6,7,8-tetrahydrofolate; that span reads GSK. One can recognise a B12-binding N-terminal domain in the interval 650–747; that stretch reads QTDEWRNGSI…FMEKEREEAR (98 aa). Methylcob(III)alamin is bound by residues Glu-697, 770–774, His-773, Ser-818, Thr-822, and Ala-874; that span reads GDVHD. In terms of domain architecture, B12-binding spans 760–895; it reads QGTIVLATVK…DENLKDDYFE (136 aa). Residues 911–1253 form the AdoMet activation domain; sequence SLKERKYLPL…LGPILGYDTD (343 aa). S-adenosyl-L-methionine-binding positions include Asp-962, Arg-1160, and 1215–1216; that span reads YF. Thr-1252 is subject to Phosphothreonine.

Belongs to the vitamin-B12 dependent methionine synthase family. In terms of assembly, monomer. Dimer. Forms a multiprotein complex with MMACHC, MMADHC and MTRR. The cofactor is methylcob(III)alamin. Zn(2+) serves as cofactor.

The protein resides in the cytoplasm. The enzyme catalyses (6S)-5-methyl-5,6,7,8-tetrahydrofolate + L-homocysteine = (6S)-5,6,7,8-tetrahydrofolate + L-methionine. It participates in amino-acid biosynthesis; L-methionine biosynthesis via de novo pathway; L-methionine from L-homocysteine (MetH route): step 1/1. Catalyzes the transfer of a methyl group from methylcob(III)alamin (MeCbl) to homocysteine, yielding enzyme-bound cob(I)alamin and methionine in the cytosol. MeCbl is an active form of cobalamin (vitamin B12) used as a cofactor for methionine biosynthesis. Cob(I)alamin form is regenerated to MeCbl by a transfer of a methyl group from 5-methyltetrahydrofolate. The processing of cobalamin in the cytosol occurs in a multiprotein complex composed of at least MMACHC, MMADHC, MTRR (methionine synthase reductase) and MTR which may contribute to shuttle safely and efficiently cobalamin towards MTR in order to produce methionine. This chain is Methionine synthase (Mtr), found in Rattus norvegicus (Rat).